A 304-amino-acid chain; its full sequence is UDP-3-O-acyl-N-acetylglucosamine deacetylase (304 aa).

Zn(2+) contacts are provided by histidine 78, histidine 237, and aspartate 241. Residue histidine 264 is the Proton donor of the active site.

Belongs to the LpxC family. The cofactor is Zn(2+).

The enzyme catalyses a UDP-3-O-[(3R)-3-hydroxyacyl]-N-acetyl-alpha-D-glucosamine + H2O = a UDP-3-O-[(3R)-3-hydroxyacyl]-alpha-D-glucosamine + acetate. The protein operates within glycolipid biosynthesis; lipid IV(A) biosynthesis; lipid IV(A) from (3R)-3-hydroxytetradecanoyl-[acyl-carrier-protein] and UDP-N-acetyl-alpha-D-glucosamine: step 2/6. Its function is as follows. Catalyzes the hydrolysis of UDP-3-O-myristoyl-N-acetylglucosamine to form UDP-3-O-myristoylglucosamine and acetate, the committed step in lipid A biosynthesis. The sequence is that of UDP-3-O-acyl-N-acetylglucosamine deacetylase from Methylococcus capsulatus (strain ATCC 33009 / NCIMB 11132 / Bath).